A 443-amino-acid polypeptide reads, in one-letter code: GTPase Der (443 aa).

EngA-type G domains follow at residues 3–167 (PVIA…PEEK) and 176–349 (IKIA…QSIQ). GTP contacts are provided by residues 9–16 (GRPNVGKS), 56–60 (DTGGL), 119–122 (NKAD), 182–189 (GRPNVGKS), 229–233 (DTAGI), and 294–297 (NKWD). The KH-like domain maps to 350 to 434 (QELTTGQLTR…PVHIKLKTDP (85 aa)).

The protein belongs to the TRAFAC class TrmE-Era-EngA-EngB-Septin-like GTPase superfamily. EngA (Der) GTPase family. Associates with the 50S ribosomal subunit.

Its function is as follows. GTPase that plays an essential role in the late steps of ribosome biogenesis. The protein is GTPase Der of Coxiella burnetii (strain CbuK_Q154) (Coxiella burnetii (strain Q154)).